Here is a 142-residue protein sequence, read N- to C-terminus: HTH-type transcriptional regulator MntR (142 aa).

The HTH dtxR-type domain occupies methionine 1–threonine 63. Mn(2+)-binding residues include aspartate 8, glutamate 11, histidine 77, glutamate 99, glutamate 102, and histidine 103.

Belongs to the DtxR/MntR family. As to quaternary structure, homodimer.

The protein localises to the cytoplasm. Its activity is regulated as follows. DNA binding is strongly activated by Mn(2+). Central regulator of manganese homeostasis. The chain is HTH-type transcriptional regulator MntR from Listeria monocytogenes serotype 4b (strain F2365).